We begin with the raw amino-acid sequence, 1031 residues long: Semaphorin-6A (1031 aa).

The N-terminal stretch at 1–18 (MRPAALLLCLTLLHCAGA) is a signal peptide. At 19–649 (GFPEDSEPIS…KSNDQLVPVT (631 aa)) the chain is on the extracellular side. One can recognise a Sema domain in the interval 24–512 (SEPISISHGN…FSTCVIKVPL (489 aa)). Residues asparagine 33, asparagine 49, and asparagine 65 are each glycosylated (N-linked (GlcNAc...) asparagine). 4 cysteine pairs are disulfide-bonded: cysteine 107–cysteine 117, cysteine 135–cysteine 144, cysteine 258–cysteine 369, and cysteine 283–cysteine 328. An N-linked (GlcNAc...) asparagine glycan is attached at asparagine 282. Residues asparagine 434 and asparagine 461 are each glycosylated (N-linked (GlcNAc...) asparagine). Cystine bridges form between cysteine 477–cysteine 506, cysteine 515–cysteine 533, cysteine 521–cysteine 568, and cysteine 525–cysteine 542. A helical membrane pass occupies residues 650-670 (LLAIAVILAFVMGAVFSGIIV). Over 671-1031 (YCVCDHRRKD…TSMKPNDACT (361 aa)) the chain is Cytoplasmic. Position 698 is a phosphoserine (serine 698). Disordered stretches follow at residues 754–777 (ALPTPESTPTLQQKRKPNRGSREW), 861–902 (SSKS…TGLS), and 914–1031 (GLEY…DACT). Positions 921 to 931 (YPTNSLTRSHQ) are enriched in polar residues. Residues 932–951 (TTTLKRNNTNSSNSSHLSRN) show a composition bias toward low complexity. Serine 953 is subject to Phosphoserine. 2 stretches are compositionally biased toward polar residues: residues 971-998 (QVHSSQPSGQAVTVSRQPSLNAYNSLTR) and 1019-1031 (PLSTSMKPNDACT).

The protein belongs to the semaphorin family. In terms of assembly, active as a homodimer or oligomer. The SEMA6A homodimer interacts with a PLXNA2 homodimer, giving rise to a heterotetramer. Interacts with EVL. In terms of tissue distribution, particularly high levels in spinal cord, cerebellum, metencephalon, superior and inferior colliculus, diencephalon, olfactory bulb and eye.

It localises to the cell membrane. Its function is as follows. Cell surface receptor for PLXNA2 that plays an important role in cell-cell signaling. Required for normal granule cell migration in the developing cerebellum. Promotes reorganization of the actin cytoskeleton and plays an important role in axon guidance in the developing central nervous system. Can act as repulsive axon guidance cue. Has repulsive action towards migrating granular neurons. May play a role in channeling sympathetic axons into the sympathetic chains and controlling the temporal sequence of sympathetic target innervation. The protein is Semaphorin-6A (Sema6a) of Mus musculus (Mouse).